Here is a 271-residue protein sequence, read N- to C-terminus: RELT-like protein 1 (271 aa).

The signal sequence occupies residues 1–23 (MAPRGLPGSAVLAAAVFVGGAVS). Residues 24–57 (SPLVRSDHSGSHPLPSKTETTPSPTNNNGNGHPE) are Extracellular-facing. The tract at residues 27–52 (VRSDHSGSHPLPSKTETTPSPTNNNG) is disordered. Positions 36 to 52 (PLPSKTETTPSPTNNNG) are enriched in low complexity. A helical transmembrane segment spans residues 58 to 78 (YIAYALVPVFFVMGLFGVLIC). Over 79 to 271 (HLLKKKGYRC…PVKRQQSDSE (193 aa)) the chain is Cytoplasmic. Phosphoserine is present on residues S109 and S114. Disordered stretches follow at residues 144–168 (CDPE…LSPG) and 231–271 (TKVE…SDSE). Pro residues predominate over residues 155–165 (PGSPPVSPGPL). Residues 231–244 (TKVEPKSNQKERRS) are compositionally biased toward basic and acidic residues. Phosphoserine occurs at positions 244 and 247.

The protein belongs to the RELT family. Interacts with RELT, RELL2, OXSR1 and PLSCR1.

It is found in the cell membrane. Functionally, induces activation of MAPK14/p38 cascade, when overexpressed. Induces apoptosis, when overexpressed. This chain is RELT-like protein 1 (RELL1), found in Bos taurus (Bovine).